A 218-amino-acid polypeptide reads, in one-letter code: Histone H1 (218 aa).

A compositionally biased stretch (low complexity) spans Met1–Ala19. Disordered stretches follow at residues Met1 to Thr42 and Val89 to Lys218. Ser2 bears the N-acetylserine mark. The 74-residue stretch at Ala37–Lys110 folds into the H15 domain. Composition is skewed to basic residues over residues Lys118–Ala133, Lys141–Lys158, Lys166–Ala184, and Lys191–Lys218.

The protein belongs to the histone H1/H5 family.

It localises to the nucleus. The protein resides in the chromosome. Its function is as follows. Histones H1 are necessary for the condensation of nucleosome chains into higher-order structures. This is Histone H1 from Gallus gallus (Chicken).